Consider the following 78-residue polypeptide: Defensin-like protein 141 (78 aa).

The signal sequence occupies residues 1–24 (MTKSIISAFFIILILGMMVNEIEG). Cystine bridges form between C31–C76, C40–C59, C45–C70, and C49–C72.

The protein belongs to the DEFL family.

It is found in the secreted. The chain is Defensin-like protein 141 (LCR3) from Arabidopsis thaliana (Mouse-ear cress).